Here is a 144-residue protein sequence, read N- to C-terminus: Cytochrome c-type biogenesis protein CcmE (144 aa).

The Cytoplasmic segment spans residues 1 to 7 (MKPRHKR). The helical; Signal-anchor for type II membrane protein transmembrane segment at 8-28 (ALMIVAALAVIGIAALLILNA) threads the bilayer. Over 29–144 (LNSNIALYVT…EQAQKNGSAK (116 aa)) the chain is Extracellular. 2 residues coordinate heme: H121 and Y125.

It belongs to the CcmE/CycJ family.

It is found in the cell membrane. In terms of biological role, heme chaperone required for the biogenesis of c-type cytochromes. Transiently binds heme delivered by CcmC and transfers the heme to apo-cytochromes in a process facilitated by CcmF and CcmH. The protein is Cytochrome c-type biogenesis protein CcmE of Polynucleobacter asymbioticus (strain DSM 18221 / CIP 109841 / QLW-P1DMWA-1) (Polynucleobacter necessarius subsp. asymbioticus).